A 467-amino-acid polypeptide reads, in one-letter code: Amino-acid permease RocE (467 aa).

12 helical membrane passes run 21 to 41 (FMISLGGVIGTGFFLGTGFTI), 47 to 67 (LGAVLSYLVGGFIMFLTMLCL), 87 to 107 (FISPAFGFAFGWLYWLGWAVT), 122 to 142 (WFPHIDVWIWCLVFAALMFIL), 162 to 182 (ILIILLFIILGGAAMFGLIDL), 207 to 227 (MLITMITVNFAFQGTELIGVA), 246 to 266 (VWRTLVFFVLSIIVIAGMIPW), 283 to 303 (IGIPYAADIMNFVILIALLSV), 336 to 356 (VPMYSLIVTMAVACLSLLTKF), 361 to 381 (TVYMVLLSLAGMSAQVGWITI), 409 to 429 (YPVLPLIGLTLNTVVLISLAF), and 435 to 455 (IALYCGVPFMIICYIIYHVVI).

Belongs to the amino acid-polyamine-organocation (APC) superfamily. Amino acid transporter (AAT) (TC 2.A.3.1) family.

Its subcellular location is the cell membrane. In terms of biological role, putative transport protein involved in arginine degradative pathway. Probably transports arginine or ornithine. The polypeptide is Amino-acid permease RocE (Bacillus subtilis (strain 168)).